The following is a 695-amino-acid chain: NADPH--cytochrome P450 reductase (695 aa).

The Lumenal portion of the chain corresponds to 1 to 8; that stretch reads MAQLDTLD. A helical transmembrane segment spans residues 9 to 31; sequence LVVLVALLVGSVAYFTKGTYWAV. The Cytoplasmic segment spans residues 32–695; sequence AKDPYASSGP…SGSYQEDVWS (664 aa). A Flavodoxin-like domain is found at 66-221; that stretch reads CVIFYGSQTG…DFLAWKEPMW (156 aa). FMN is bound by residues 72–77, 123–126, 169–178, and Asp204; these read SQTGTA, ATYG, and LGNNTYEHYN. The FAD-binding FR-type domain maps to 277–538; the sequence is HNPFIAPIVE…HVRHSNFKLP (262 aa). Arg296 contributes to the NADP(+) binding site. FAD-binding positions include 451–454, 469–471, and 486–489; these read RYYS, TAV, and GVTT. Residues Thr552, 614–615, 620–624, and Glu656 contribute to the NADP(+) site; these read SR and KVYVQ. Position 694 (Trp694) interacts with FAD.

Belongs to the NADPH--cytochrome P450 reductase family. The protein in the N-terminal section; belongs to the flavodoxin family. It in the C-terminal section; belongs to the flavoprotein pyridine nucleotide cytochrome reductase family. The cofactor is FAD. Requires FMN as cofactor.

The protein localises to the endoplasmic reticulum membrane. The protein resides in the mitochondrion outer membrane. Its subcellular location is the cell membrane. The catalysed reaction is 2 oxidized [cytochrome P450] + NADPH = 2 reduced [cytochrome P450] + NADP(+) + H(+). Its function is as follows. This enzyme is required for electron transfer from NADP to cytochrome P450 in microsomes. It can also provide electron transfer to heme oxygenase and cytochrome B5. Involved in ergosterol biosynthesis. The polypeptide is NADPH--cytochrome P450 reductase (Aspergillus oryzae (strain ATCC 42149 / RIB 40) (Yellow koji mold)).